Consider the following 322-residue polypeptide: Fructose-1,6-bisphosphatase class 1 1 (322 aa).

4 residues coordinate Mg(2+): E84, D103, L105, and D106. Substrate is bound by residues 106–109 (DGSS), N198, and K264. Mg(2+) is bound at residue E270.

Belongs to the FBPase class 1 family. In terms of assembly, homotetramer. The cofactor is Mg(2+).

The protein resides in the cytoplasm. It catalyses the reaction beta-D-fructose 1,6-bisphosphate + H2O = beta-D-fructose 6-phosphate + phosphate. The protein operates within carbohydrate biosynthesis; gluconeogenesis. In Pseudoalteromonas translucida (strain TAC 125), this protein is Fructose-1,6-bisphosphatase class 1 1.